The sequence spans 169 residues: Large ribosomal subunit protein uL10 (169 aa).

This sequence belongs to the universal ribosomal protein uL10 family. As to quaternary structure, part of the ribosomal stalk of the 50S ribosomal subunit. The N-terminus interacts with L11 and the large rRNA to form the base of the stalk. The C-terminus forms an elongated spine to which L12 dimers bind in a sequential fashion forming a multimeric L10(L12)X complex.

Its function is as follows. Forms part of the ribosomal stalk, playing a central role in the interaction of the ribosome with GTP-bound translation factors. The polypeptide is Large ribosomal subunit protein uL10 (Rickettsia massiliae (strain Mtu5)).